A 311-amino-acid chain; its full sequence is Ribonuclease Z (311 aa).

Zn(2+) contacts are provided by His-61, His-63, Asp-65, His-66, His-137, Asp-207, and His-263. Asp-65 serves as the catalytic Proton acceptor.

This sequence belongs to the RNase Z family. In terms of assembly, homodimer. It depends on Zn(2+) as a cofactor.

It carries out the reaction Endonucleolytic cleavage of RNA, removing extra 3' nucleotides from tRNA precursor, generating 3' termini of tRNAs. A 3'-hydroxy group is left at the tRNA terminus and a 5'-phosphoryl group is left at the trailer molecule.. Its function is as follows. Zinc phosphodiesterase, which displays some tRNA 3'-processing endonuclease activity. Probably involved in tRNA maturation, by removing a 3'-trailer from precursor tRNA. The protein is Ribonuclease Z of Thermococcus onnurineus (strain NA1).